A 1208-amino-acid polypeptide reads, in one-letter code: Lysine-specific demethylase JMJ17 (1208 aa).

A PHD-type 1; degenerate zinc finger spans residues 1–36; the sequence is MLLCDSCNKGWHIYCLSPPLKHIPLGNWYCLECLNT. Zn(2+) contacts are provided by Cys-4, Cys-7, Cys-30, and Cys-33. The 167-residue stretch at 126–292 folds into the JmjC domain; the sequence is EYCGSPWNLN…YGGSGAELYR (167 aa). His-172, Glu-174, and His-260 together coordinate Fe cation. 8 residues coordinate Zn(2+): Cys-369, Cys-372, Cys-383, Cys-385, Cys-392, His-395, Cys-400, and Cys-402. The C5HC2 zinc finger occupies 369–421; the sequence is CIICQQFLHLSAIVCNCRPSVFACLEHWKHLCECEPTKLRLEYRYTLAELDMM. The Nuclear localization signal signature appears at 613–620; the sequence is SKKISSAK. The PHD-type 2 zinc-finger motif lies at 1099–1145; it reads MLHCICLKPYNSRSMVSCSQCGEWYHTYCLKLHWRPKAYVCSACCPL. The Zn(2+) site is built by Cys-1102, Cys-1104, Cys-1116, Cys-1119, His-1124, Cys-1127, Cys-1139, and Cys-1142.

It belongs to the JARID1 histone demethylase family. Fe(2+) is required as a cofactor. As to expression, expressed in inflorescences, roots, seedlings and siliques, and, at low levels, in leaves and stems.

It localises to the nucleus. The catalysed reaction is N(6),N(6),N(6)-trimethyl-L-lysyl(4)-[histone H3] + 2-oxoglutarate + O2 = N(6),N(6)-dimethyl-L-lysyl(4)-[histone H3] + formaldehyde + succinate + CO2. The enzyme catalyses N(6),N(6)-dimethyl-L-lysyl(4)-[histone H3] + 2-oxoglutarate + O2 = N(6)-methyl-L-lysyl(4)-[histone H3] + formaldehyde + succinate + CO2. It catalyses the reaction N(6)-methyl-L-lysyl(4)-[histone H3] + 2-oxoglutarate + O2 = L-lysyl(4)-[histone H3] + formaldehyde + succinate + CO2. It carries out the reaction N(6),N(6),N(6)-trimethyl-L-lysyl(4)-[histone H3] + 3 2-oxoglutarate + 3 O2 = L-lysyl(4)-[histone H3] + 3 formaldehyde + 3 succinate + 3 CO2. Functionally, functions as a histone H3 'Lys-4' (H3K4me) demethylase involved in the regulation of gene expression. Active on H3K4me1, H3K4me2 and H3K4me3. Repressor of the abscisic acid (ABA) signaling pathway, especially during stomatal closure regulation. Negative regulator of responses to dehydration stress by binding directly to the chromatin of SRK2E/OST1 and demethylating H3K4me3 to regulates its expression. Together with JMJ14 and JMJ16, required for plant growth and development. This is Lysine-specific demethylase JMJ17 from Arabidopsis thaliana (Mouse-ear cress).